The sequence spans 34 residues: Ornithine carbamoyltransferase, catabolic (34 aa).

The protein belongs to the aspartate/ornithine carbamoyltransferase superfamily. OTCase family. As to quaternary structure, probably nonameric or dodecameric.

It is found in the cytoplasm. It carries out the reaction carbamoyl phosphate + L-ornithine = L-citrulline + phosphate + H(+). It participates in amino-acid degradation; L-arginine degradation via ADI pathway; carbamoyl phosphate from L-arginine: step 2/2. The sequence is that of Ornithine carbamoyltransferase, catabolic (arcB) from Pseudomonas putida (Arthrobacter siderocapsulatus).